A 677-amino-acid chain; its full sequence is MSNALSPAQRLTQIINTINEYNYQYYVQDNPSVPDAEYDRLMRELLDIENNHPDLRSPDSPSQKVGGAALSAFEQVEHEVPMLSLDNAFDEDDMQAFEKRIKDRLKISSEISFSCEPKLDGLAVSILYENGQLVRAATRGDGRVGENITTNVRTIANVPLRLRGENFPSRLEVRGEVIMTRAGFVTLNEAQIKKGKKPFVNPRNAAAGSLRQLDPKITAARPLLFYSYSLGLVENEQQPLGETHSSRLAQLSEWGLPLSKELEVTQGATQCLTYFHKIGELRSQLSYDIDGVVFKVDNIAMQQELGFVARAPRWAIAHKFPAQEEMSTLLDVEFQVGRTGAITPVARLEPTFVGGVTVSNATLHNQDEINRLGIKIGDSVIIRRAGDVIPQIVAIVADKRPDDAKDIVFPESCPVCDSAIEKLEGEAVARCTGGLYCKAQRKEAMKHFASRKALDVDGLGDKLIEQLVDAEMVKSPADFFALDIAPLSSMERMGEKSAVNLVNALEKSKKTTLAKFLYSLGIREVGEATAQNLAQHFLTLEAIEQADLDALQAVSDVGVIVAQHVFNFFKEEHNLEVISALLEAGVHWPKIEKLALDELPLAGQVYVLTGTLNVMDRNSAKAKLQSLGAKVSGSVSAKTDCLVAGEKAGSKLTKAQDLGVKVMNEDDMLAMFADLEG.

NAD(+) is bound by residues 35–39, 84–85, and glutamate 116; these read DAEYD and SL. Lysine 118 (N6-AMP-lysine intermediate) is an active-site residue. Residues arginine 139, glutamate 176, lysine 295, and lysine 319 each contribute to the NAD(+) site. Residues cysteine 413, cysteine 416, cysteine 431, and cysteine 437 each coordinate Zn(2+). Residues 596–677 form the BRCT domain; the sequence is LDELPLAGQV…MLAMFADLEG (82 aa).

The protein belongs to the NAD-dependent DNA ligase family. LigA subfamily. Requires Mg(2+) as cofactor. Mn(2+) serves as cofactor.

It carries out the reaction NAD(+) + (deoxyribonucleotide)n-3'-hydroxyl + 5'-phospho-(deoxyribonucleotide)m = (deoxyribonucleotide)n+m + AMP + beta-nicotinamide D-nucleotide.. Functionally, DNA ligase that catalyzes the formation of phosphodiester linkages between 5'-phosphoryl and 3'-hydroxyl groups in double-stranded DNA using NAD as a coenzyme and as the energy source for the reaction. It is essential for DNA replication and repair of damaged DNA. In Pseudoalteromonas atlantica (strain T6c / ATCC BAA-1087), this protein is DNA ligase.